A 496-amino-acid polypeptide reads, in one-letter code: Ankyrin repeat domain-containing protein 53 (496 aa).

Residues 1-15 (MASAGSTARRAGSGS) show a composition bias toward low complexity. Residues 1-66 (MASAGSTARR…RPSEESDQTT (66 aa)) form a disordered region. Over residues 51–60 (AESKQPRPSE) the composition is skewed to basic and acidic residues. 3 ANK repeats span residues 105–135 (KGFTAIHFAAQRGKLACLQVLVEEYKFPVNL), 139–172 (NSQTPLHLVIHKDNTTVALPCIYYLLEKGAALNA), and 176–205 (NGCTPLHLAVREGLLDCVKVLVQSGANVHA). The interval 292 to 320 (LVSNTKQARATALSKTPEQRGSQCSSSFH) is disordered.

As to quaternary structure, interacts with PSRC1; recruited by PSRC1 to the spindle during mitosis. Phosphorylated during mitosis.

The protein resides in the cytoplasm. Its subcellular location is the cytoskeleton. The protein localises to the spindle. It localises to the spindle pole. Required for normal progression through mitosis. Involved in chromosome alignment and cytokinesis via regulation of microtubules polymerization. The protein is Ankyrin repeat domain-containing protein 53 (ANKRD53) of Macaca fascicularis (Crab-eating macaque).